Consider the following 333-residue polypeptide: Ketol-acid reductoisomerase (NADP(+)) (333 aa).

The 179-residue stretch at 1–179 (MFYDDNADLS…GGTRAGVIKT (179 aa)) folds into the KARI N-terminal Rossmann domain. Residues 22–25 (YGSQ), Ser-48, Ser-50, and 80–83 (DTAQ) contribute to the NADP(+) site. His-105 is an active-site residue. Gly-131 is a binding site for NADP(+). A KARI C-terminal knotted domain is found at 180-325 (TFKDETETDL…KKLRDLMSWV (146 aa)). 4 residues coordinate Mg(2+): Asp-188, Glu-192, Glu-224, and Glu-228. Ser-249 contributes to the substrate binding site.

The protein belongs to the ketol-acid reductoisomerase family. It depends on Mg(2+) as a cofactor.

The enzyme catalyses (2R)-2,3-dihydroxy-3-methylbutanoate + NADP(+) = (2S)-2-acetolactate + NADPH + H(+). It carries out the reaction (2R,3R)-2,3-dihydroxy-3-methylpentanoate + NADP(+) = (S)-2-ethyl-2-hydroxy-3-oxobutanoate + NADPH + H(+). It participates in amino-acid biosynthesis; L-isoleucine biosynthesis; L-isoleucine from 2-oxobutanoate: step 2/4. Its pathway is amino-acid biosynthesis; L-valine biosynthesis; L-valine from pyruvate: step 2/4. Its function is as follows. Involved in the biosynthesis of branched-chain amino acids (BCAA). Catalyzes an alkyl-migration followed by a ketol-acid reduction of (S)-2-acetolactate (S2AL) to yield (R)-2,3-dihydroxy-isovalerate. In the isomerase reaction, S2AL is rearranged via a Mg-dependent methyl migration to produce 3-hydroxy-3-methyl-2-ketobutyrate (HMKB). In the reductase reaction, this 2-ketoacid undergoes a metal-dependent reduction by NADPH to yield (R)-2,3-dihydroxy-isovalerate. This Mycobacterium leprae (strain TN) protein is Ketol-acid reductoisomerase (NADP(+)).